The following is a 395-amino-acid chain: Sensor protein DltS (395 aa).

Transmembrane regions (helical) follow at residues 9-29 (FVFL…AVSN) and 136-156 (FLIL…SLYL). The Histidine kinase domain maps to 177-387 (DASHELKTPI…RLEVQLPIDG (211 aa)). Histidine 180 carries the phosphohistidine; by autocatalysis modification.

The protein localises to the cell membrane. The enzyme catalyses ATP + protein L-histidine = ADP + protein N-phospho-L-histidine.. Its function is as follows. Member of the two-component regulatory system DltS/DltR. Regulates the expression of the dlt operon. Probably phosphorylates DltR. The chain is Sensor protein DltS (dltS) from Streptococcus agalactiae serotype V (strain ATCC BAA-611 / 2603 V/R).